We begin with the raw amino-acid sequence, 195 residues long: MSTVKVNGAKNGGERMVLPAGEAAAKYYPAYRENVPKKARKAVRPTKLRASLAPGTVCILLAGRFRGKRVVVLSQLEDTLVVTGPYKVNGVPIRRVNHRYVIATSAPKIDVSGVSVEKFTKAYFAKQKRSGPVKKDEAFFAENAPKNALPAERIADQKAVDAKLLPAIKAIPNMKEYLAASFALSNGDRPHLMKF.

Phosphoserine occurs at positions 105 and 115.

Belongs to the eukaryotic ribosomal protein eL6 family. As to quaternary structure, component of the large ribosomal subunit (LSU). Mature yeast ribosomes consist of a small (40S) and a large (60S) subunit. The 40S small subunit contains 1 molecule of ribosomal RNA (18S rRNA) and at least 33 different proteins. The large 60S subunit contains 3 rRNA molecules (25S, 5.8S and 5S rRNA) and at least 46 different proteins.

It localises to the cytoplasm. Its subcellular location is the nucleus. The protein localises to the nucleolus. Its function is as follows. Component of the ribosome, a large ribonucleoprotein complex responsible for the synthesis of proteins in the cell. The small ribosomal subunit (SSU) binds messenger RNAs (mRNAs) and translates the encoded message by selecting cognate aminoacyl-transfer RNA (tRNA) molecules. The large subunit (LSU) contains the ribosomal catalytic site termed the peptidyl transferase center (PTC), which catalyzes the formation of peptide bonds, thereby polymerizing the amino acids delivered by tRNAs into a polypeptide chain. The nascent polypeptides leave the ribosome through a tunnel in the LSU and interact with protein factors that function in enzymatic processing, targeting, and the membrane insertion of nascent chains at the exit of the ribosomal tunnel. This chain is Large ribosomal subunit protein eL6 (rpl6), found in Schizosaccharomyces pombe (strain 972 / ATCC 24843) (Fission yeast).